Here is a 205-residue protein sequence, read N- to C-terminus: Large ribosomal subunit protein uL4 (205 aa).

A disordered region spans residues 44 to 79 (RAGTKAQKTRREVSGSGAKPWRQKGTGRARAGSSRS).

The protein belongs to the universal ribosomal protein uL4 family. In terms of assembly, part of the 50S ribosomal subunit.

In terms of biological role, one of the primary rRNA binding proteins, this protein initially binds near the 5'-end of the 23S rRNA. It is important during the early stages of 50S assembly. It makes multiple contacts with different domains of the 23S rRNA in the assembled 50S subunit and ribosome. Its function is as follows. Forms part of the polypeptide exit tunnel. This is Large ribosomal subunit protein uL4 from Coxiella burnetii (strain Dugway 5J108-111).